Consider the following 1198-residue polypeptide: RNA2 polyprotein (1198 aa).

Specific enzymatic cleavages in vivo by the P1 encoded 3C-like protease yield mature proteins.

The protein resides in the host cell junction. It localises to the host plasmodesma. It is found in the virion. In terms of biological role, transports viral genome to neighboring plant cells directly through plasmosdesmata, without any budding. The movement protein allows efficient cell to cell propagation, by bypassing the host cell wall barrier. Acts by forming a tubular structure at the host plasmodesmata, enlarging it enough to allow free passage of virion capsids. Functionally, capsid proteins VP35, VP26, and VP23 form a capsid enclosing the viral positive strand RNA genome. Together they form an icosahedral capsid pseudo T=3 with a diameter of approximately 30 nm (Potential). This Tomato torrado virus (isolate Solanum lycopersicum/Spain/PRIToTV0301/-) (ToTV) protein is RNA2 polyprotein.